The sequence spans 203 residues: Thymidine kinase (203 aa).

Residues 21 to 28 and 99 to 102 each bind ATP; these read GCMFAGKT and DEIQ. The active-site Proton acceptor is the glutamate 100. The Zn(2+) site is built by cysteine 156, cysteine 159, cysteine 194, and cysteine 197.

This sequence belongs to the thymidine kinase family. As to quaternary structure, homotetramer.

The protein resides in the cytoplasm. It catalyses the reaction thymidine + ATP = dTMP + ADP + H(+). This chain is Thymidine kinase, found in Mesoplasma florum (strain ATCC 33453 / NBRC 100688 / NCTC 11704 / L1) (Acholeplasma florum).